The primary structure comprises 372 residues: MGLTSLQVCMDSDWLQESESSGGSMLDSSTNSPSAADILAACSTRPQASAVAVAAAALMDGGRRLRPPHDHPQKCPRCESTHTKFCYYNNYSLSQPRYFCKTCRRYWTKGGTLRNIPVGGGCRKNKKPSSSNSSSSTSSGKKPSNIVTANTSDLMALAHSHQNYQHSPLGFSHFGGMMGSYSTPEHGNVGFLESKYGGLLSQSPRPIDFLDSKFDLMGVNNDNLVMVNHGSNGDHHHHHNHHMGLNHGVGLNNNNNNGGFNGISTGGNGNGGGLMDISTCQRLMLSNYDHHHYNHQEDHQRVATIMDVKPNPKLLSLDWQQDQCYSNGGGSGGAGKSDGGGYGNGGYINGLGSSWNGLMNGYGTSTKTNSLV.

The Dof-type zinc finger occupies 73–127; it reads QKCPRCESTHTKFCYYNNYSLSQPRYFCKTCRRYWTKGGTLRNIPVGGGCRKNKK. Zn(2+) is bound by residues Cys-75, Cys-78, Cys-100, and Cys-103. Residues 117 to 146 form a disordered region; that stretch reads PVGGGCRKNKKPSSSNSSSSTSSGKKPSNI. The span at 128-145 shows a compositional bias: low complexity; the sequence is PSSSNSSSSTSSGKKPSN.

The PEAR proteins (e.g. DOF2.4, DOF5.1, DOF3.2, DOF1.1, DOF5.6 and DOF5.3) form a short-range concentration gradient that peaks at protophloem sieve elements (PSE). Preferentially expressed in the vasculature of all organs, including seedlings, roots, stems, buds, leaves, flowers and siliques, and particularly in the cambium, phloem and interfascicular parenchyma cells of inflorescence stems.

It is found in the nucleus. Functionally, transcription factor that binds specifically to a 5'-AA[AG]G-3' consensus core sequence. Promotes expression. The PEAR proteins (e.g. DOF2.4, DOF5.1, DOF3.2, DOF1.1, DOF5.6 and DOF5.3) activate gene expression that promotes radial growth of protophloem sieve elements. Involved in the regulation of interfascicular cambium formation and vascular tissue development, particularly at a very early stage during inflorescence stem development; promotes both cambium activity and phloem specification, but prevents xylem specification. The sequence is that of Dof zinc finger protein DOF5.6 from Arabidopsis thaliana (Mouse-ear cress).